Reading from the N-terminus, the 196-residue chain is Protein LURP-one-related 8 (196 aa).

It belongs to the LOR family.

Its function is as follows. Might be related to the phospholipid scramblase and tubby-like superfamily of membrane tethered transcription factors. In Arabidopsis thaliana (Mouse-ear cress), this protein is Protein LURP-one-related 8.